A 430-amino-acid chain; its full sequence is Histidine--tRNA ligase (430 aa).

This sequence belongs to the class-II aminoacyl-tRNA synthetase family. As to quaternary structure, homodimer.

The protein localises to the cytoplasm. It catalyses the reaction tRNA(His) + L-histidine + ATP = L-histidyl-tRNA(His) + AMP + diphosphate + H(+). The sequence is that of Histidine--tRNA ligase from Parasynechococcus marenigrum (strain WH8102).